Reading from the N-terminus, the 306-residue chain is Myb family transcription factor MOF1 (306 aa).

Residues 19–79 (RSKVPRLRWT…HLQMYRCSRL (61 aa)) form the HTH myb-type domain. Residues 50–75 (PKLILQLMGVKGLTISHVKSHLQMYR) constitute a DNA-binding region (H-T-H motif).

As to quaternary structure, interacts with TPR1, TPR2 and TPR3. In terms of tissue distribution, expressed in roots, leaves, leaf sheaths, culms, panicles, lemmas, paleas, lodicules, stamens, and pistils.

It is found in the nucleus. Functionally, transcriptional repressor that plays a role in the regulation of organ identity and spikelet meristem determinacy. Interacts with the TPR corepressors to possibly repress the expression of downstream target genes. The chain is Myb family transcription factor MOF1 from Oryza sativa subsp. japonica (Rice).